The chain runs to 189 residues: Large ribosomal subunit protein uL13 (189 aa).

It belongs to the universal ribosomal protein uL13 family.

The polypeptide is Large ribosomal subunit protein uL13 (rpl13a) (Salmo trutta (Brown trout)).